The sequence spans 197 residues: Auxin-responsive protein IAA19 (197 aa).

An EAR-like (transcriptional repression) motif is present at residues 13-17 (LRLGL). Over residues 35-47 (MNMTSSGSNSDQC) the composition is skewed to polar residues. Residues 35–67 (MNMTSSGSNSDQCESGVVSSGGDAEKVNDSPAA) form a disordered region. One can recognise a PB1 domain in the interval 96–184 (LGYVKVSMDG…KRLRIMKRSD (89 aa)).

It belongs to the Aux/IAA family. In terms of assembly, homodimers and heterodimers. Interacts with the auxin response factor ARF7.

The protein resides in the nucleus. In terms of biological role, aux/IAA proteins are short-lived transcriptional factors that function as repressors of early auxin response genes at low auxin concentrations. Repression is thought to result from the interaction with auxin response factors (ARFs), proteins that bind to the auxin-responsive promoter element (AuxRE). Formation of heterodimers with ARF proteins may alter their ability to modulate early auxin response genes expression. The polypeptide is Auxin-responsive protein IAA19 (IAA19) (Arabidopsis thaliana (Mouse-ear cress)).